A 565-amino-acid polypeptide reads, in one-letter code: Periplasmic trehalase (565 aa).

Residues 1–30 form the signal peptide; it reads MKSPAPSRPQKMALIPACIFLCFAALSVQA. Residues Arg-152, 159-160, Asn-196, 205-207, 277-279, and Gly-310 contribute to the substrate site; these read WD, RSQ, and RPE. Active-site proton donor/acceptor residues include Asp-312 and Glu-496. Residue Glu-511 participates in substrate binding. The segment at 540-565 is disordered; that stretch reads DNVPATHPTVKSATTQPSTKEAQPTP. The span at 548-565 shows a compositional bias: polar residues; sequence TVKSATTQPSTKEAQPTP.

Belongs to the glycosyl hydrolase 37 family. Monomer.

The protein resides in the periplasm. It carries out the reaction alpha,alpha-trehalose + H2O = alpha-D-glucose + beta-D-glucose. In terms of biological role, provides the cells with the ability to utilize trehalose at high osmolarity by splitting it into glucose molecules that can subsequently be taken up by the phosphotransferase-mediated uptake system. The sequence is that of Periplasmic trehalase from Shigella flexneri.